The primary structure comprises 428 residues: Nucleoside diphosphate phosphatase ENTPD5 (428 aa).

An N-terminal signal peptide occupies residues 1–24 (MATSWGTVFFMLVVSCVCSAVSHR). Glutamate 172 (proton acceptor) is an active-site residue. N-linked (GlcNAc...) asparagine glycosylation is present at asparagine 232. Cystine bridges form between cysteine 272–cysteine 303 and cysteine 363–cysteine 377. N-linked (GlcNAc...) asparagine glycosylation is present at asparagine 368.

This sequence belongs to the GDA1/CD39 NTPase family. Monomer; active form. Homodimer; disulfide-linked. Homodimers are enzymatically inactive. Ca(2+) is required as a cofactor. Requires Mg(2+) as cofactor. Post-translationally, N-glycosylated; high-mannose type. Glycosylation is not essential for enzymatic activity. In terms of tissue distribution, expressed in adult liver, kidney, prostate, testis and colon. Much weaker expression in other tissues.

The protein localises to the endoplasmic reticulum. It localises to the secreted. The catalysed reaction is a ribonucleoside 5'-diphosphate + H2O = a ribonucleoside 5'-phosphate + phosphate + H(+). The enzyme catalyses GDP + H2O = GMP + phosphate + H(+). It carries out the reaction UDP + H2O = UMP + phosphate + H(+). It catalyses the reaction IDP + H2O = IMP + phosphate + H(+). The catalysed reaction is CDP + H2O = CMP + phosphate + H(+). The enzyme catalyses ADP + H2O = AMP + phosphate + H(+). Its pathway is protein modification; protein glycosylation. Hydrolyzes nucleoside diphosphates with a preference for GDP, IDP and UDP compared to ADP and CDP. In the lumen of the endoplasmic reticulum, hydrolyzes UDP that acts as an end-product feedback inhibitor of the UDP-Glc:glycoprotein glucosyltransferases. UMP can be transported back by an UDP-sugar antiporter to the cytosol where it is consumed to regenerate UDP-glucose. Therefore, it positively regulates protein reglucosylation by clearing UDP from the ER lumen and by promoting the regeneration of UDP-glucose. Protein reglucosylation is essential to proper glycoprotein folding and quality control in the ER. The protein is Nucleoside diphosphate phosphatase ENTPD5 of Homo sapiens (Human).